Reading from the N-terminus, the 181-residue chain is Protein GrpE (181 aa).

Belongs to the GrpE family. As to quaternary structure, homodimer.

The protein localises to the cytoplasm. Functionally, participates actively in the response to hyperosmotic and heat shock by preventing the aggregation of stress-denatured proteins, in association with DnaK and GrpE. It is the nucleotide exchange factor for DnaK and may function as a thermosensor. Unfolded proteins bind initially to DnaJ; upon interaction with the DnaJ-bound protein, DnaK hydrolyzes its bound ATP, resulting in the formation of a stable complex. GrpE releases ADP from DnaK; ATP binding to DnaK triggers the release of the substrate protein, thus completing the reaction cycle. Several rounds of ATP-dependent interactions between DnaJ, DnaK and GrpE are required for fully efficient folding. In Verminephrobacter eiseniae (strain EF01-2), this protein is Protein GrpE.